Consider the following 526-residue polypeptide: Glutamate--cysteine ligase (526 aa).

The protein belongs to the glutamate--cysteine ligase type 1 family. Type 1 subfamily.

It carries out the reaction L-cysteine + L-glutamate + ATP = gamma-L-glutamyl-L-cysteine + ADP + phosphate + H(+). Its pathway is sulfur metabolism; glutathione biosynthesis; glutathione from L-cysteine and L-glutamate: step 1/2. In Shewanella amazonensis (strain ATCC BAA-1098 / SB2B), this protein is Glutamate--cysteine ligase.